A 375-amino-acid polypeptide reads, in one-letter code: Succinyl-diaminopimelate desuccinylase (375 aa).

H66 contributes to the Zn(2+) binding site. D68 is a catalytic residue. D99 is a Zn(2+) binding site. E133 functions as the Proton acceptor in the catalytic mechanism. E134, E162, and H348 together coordinate Zn(2+).

Belongs to the peptidase M20A family. DapE subfamily. In terms of assembly, homodimer. Zn(2+) serves as cofactor. Co(2+) is required as a cofactor.

It catalyses the reaction N-succinyl-(2S,6S)-2,6-diaminopimelate + H2O = (2S,6S)-2,6-diaminopimelate + succinate. The protein operates within amino-acid biosynthesis; L-lysine biosynthesis via DAP pathway; LL-2,6-diaminopimelate from (S)-tetrahydrodipicolinate (succinylase route): step 3/3. In terms of biological role, catalyzes the hydrolysis of N-succinyl-L,L-diaminopimelic acid (SDAP), forming succinate and LL-2,6-diaminopimelate (DAP), an intermediate involved in the bacterial biosynthesis of lysine and meso-diaminopimelic acid, an essential component of bacterial cell walls. In Escherichia coli O139:H28 (strain E24377A / ETEC), this protein is Succinyl-diaminopimelate desuccinylase.